A 247-amino-acid chain; its full sequence is NADH-ubiquinone oxidoreductase chain 6 (247 aa).

Transmembrane regions (helical) follow at residues 18–38, 44–64, 70–90, 104–124, and 168–188; these read TMILSVLSSPALVSGLMVVRA, SVLFPILVFCDTSGLLILLGL, ISPVVHIGAIAVSFLFVVMMF, YLPVSGIIGLIFWWEMFFILD, and VWFLVSSLILLVAMIGAIVLT.

This sequence belongs to the complex I subunit 6 family.

The protein resides in the mitochondrion membrane. It catalyses the reaction a ubiquinone + NADH + 5 H(+)(in) = a ubiquinol + NAD(+) + 4 H(+)(out). In terms of biological role, core subunit of the mitochondrial membrane respiratory chain NADH dehydrogenase (Complex I) that is believed to belong to the minimal assembly required for catalysis. Complex I functions in the transfer of electrons from NADH to the respiratory chain. The immediate electron acceptor for the enzyme is believed to be ubiquinone. This chain is NADH-ubiquinone oxidoreductase chain 6 (ND6), found in Triticum aestivum (Wheat).